The chain runs to 184 residues: Adenine phosphoribosyltransferase 2 (184 aa).

It belongs to the purine/pyrimidine phosphoribosyltransferase family. As to quaternary structure, homodimer.

Its subcellular location is the cytoplasm. The enzyme catalyses AMP + diphosphate = 5-phospho-alpha-D-ribose 1-diphosphate + adenine. Its pathway is purine metabolism; AMP biosynthesis via salvage pathway; AMP from adenine: step 1/1. Catalyzes a salvage reaction resulting in the formation of AMP, that is energically less costly than de novo synthesis. The polypeptide is Adenine phosphoribosyltransferase 2 (Rhizobium etli (strain ATCC 51251 / DSM 11541 / JCM 21823 / NBRC 15573 / CFN 42)).